A 349-amino-acid polypeptide reads, in one-letter code: Probable L-asparaginase periplasmic (349 aa).

The signal sequence occupies residues 1 to 21 (MKLTKLALCTLFGLGVSIANA). The 325-residue stretch at 25–349 (PNITILATGG…KVIQQYFEDF (325 aa)) folds into the Asparaginase/glutaminase domain. Thr35 (O-isoaspartyl threonine intermediate) is an active-site residue. Residues Ser81 and 112-113 (TD) each bind substrate. The cysteines at positions 100 and 128 are disulfide-linked.

The protein belongs to the asparaginase 1 family.

The protein resides in the periplasm. It carries out the reaction L-asparagine + H2O = L-aspartate + NH4(+). This Haemophilus influenzae (strain ATCC 51907 / DSM 11121 / KW20 / Rd) protein is Probable L-asparaginase periplasmic (ansB).